A 481-amino-acid chain; its full sequence is Neuronal acetylcholine receptor subunit eat-2 (481 aa).

Residues 1 to 19 (MFLLLQILYILLFLNLADT) form the signal peptide. The Extracellular segment spans residues 20–235 (SDDEYRLLKD…MHLKRRTMYY (216 aa)). Asn-93 carries N-linked (GlcNAc...) asparagine glycosylation. Cys-147 and Cys-161 form a disulfide bridge. Helical transmembrane passes span 236-256 (GLNW…GFTM), 264-284 (VTLQ…VSEV), and 292-312 (IPII…SICV). Topologically, residues 313–443 (SLITVNIFYR…WRFMAMVIDR (131 aa)) are cytoplasmic. The segment at 356–384 (KPKREKKKEEEEDEESNAGGKEEESELIS) is disordered. Residues 444–464 (ASLFLFTGLIFGTTFVIFAAC) form a helical membrane-spanning segment.

It belongs to the ligand-gated ion channel (TC 1.A.9) family. Acetylcholine receptor (TC 1.A.9.1) subfamily. As to quaternary structure, neuronal AChR seems to be composed of two different type of subunits: alpha and beta.

The protein resides in the postsynaptic cell membrane. The protein localises to the cell membrane. Its function is as follows. After binding acetylcholine, the AChR responds by an extensive change in conformation that affects all subunits and leads to opening of an ion-conducting channel across the plasma membrane. Nicotinic acetylcholine receptor in the MC pharyngeal motor neuron involved in pharyngeal pumping. Has a role in the determination of life span possibly via calorific restriction which affects growth rate, although this is independent of metabolic activity. The protein is Neuronal acetylcholine receptor subunit eat-2 of Caenorhabditis briggsae.